The sequence spans 515 residues: Maturase K (515 aa).

It belongs to the intron maturase 2 family. MatK subfamily.

It localises to the plastid. It is found in the chloroplast. Usually encoded in the trnK tRNA gene intron. Probably assists in splicing its own and other chloroplast group II introns. The polypeptide is Maturase K (Pinus sibirica (Siberian pine)).